The primary structure comprises 322 residues: Ribonucleoside-diphosphate reductase small subunit (322 aa).

Asp-70, Glu-101, and His-104 together coordinate Fe cation. Residue Tyr-108 is part of the active site. The Fe cation site is built by Glu-163, Glu-197, and His-200.

The protein belongs to the ribonucleoside diphosphate reductase small chain family. As to quaternary structure, heterodimer of a large and a small subunit. It depends on Fe cation as a cofactor.

The enzyme catalyses a 2'-deoxyribonucleoside 5'-diphosphate + [thioredoxin]-disulfide + H2O = a ribonucleoside 5'-diphosphate + [thioredoxin]-dithiol. Provides the precursors necessary for DNA synthesis. Catalyzes the biosynthesis of deoxyribonucleotides from the corresponding ribonucleotides. This is Ribonucleoside-diphosphate reductase small subunit (RNR2) from Plasmodium falciparum (isolate FCR-3 / Gambia).